We begin with the raw amino-acid sequence, 257 residues long: MTTNFYTAFPTLGYTAYPQFAFAAATTAPSLTSATTSSTTMAPMAPNSESGRRAGRRERTSFNRGQLDQLEKVFRETQYPDVHRREALAKAINLPDGRVQVITVWFKNRRAKDRNNKKMDGVHPGSTSSRSSNGSPHNESKPDTKSLGIHIPGTPEFNAHSAAKYEANSAVLSQLQQQQQQQLQQPKSELEDSKPLADTKYDSTQSLLPQAQAAAYASYATTAPYPYNYNSYFPSNFYYQQYGSNDYTPNITAYSPL.

Low complexity predominate over residues 33–49 (SATTSSTTMAPMAPNSE). Disordered stretches follow at residues 33–63 (SATT…TSFN) and 113–156 (DRNN…GTPE). Positions 55 to 117 (GRRERTSFNR…NRRAKDRNNK (63 aa)) form a DNA-binding region, homeobox. A compositionally biased stretch (low complexity) spans 123 to 137 (HPGSTSSRSSNGSPH).

This sequence belongs to the paired homeobox family. Interacts with sox-2. In terms of tissue distribution, expressed in ASE and AWC chemosensory neurons. Expressed left-right asymmetrically in the embryo, in the grandmother cell and the mother cell to the MI pharyngeal motorneuron but in neither analogous precursors of the e3D neuron.

The protein localises to the nucleus. Functionally, probable transcription factor, acting as a progenitor identity factor regulating the development of lineally-related embryonic cells including glial, excretory and neuronal cells. Mediates chemosensory function of ASE and AWC neurons. In ASE neurons, required to diversify the fate of the ASEL neurons from the ASER neurons. Acts cell-autonomously to establish a neuronal left right asymmetry, possibly promoting asymmetric expression of the helix-loop-helix proteins ngn-1 and hlh-2. In cooperation with the transcription factor sox-2, required for the differentiation of AWC olfactory neurons. May regulate the expression of sox-2 in AWC olfactory neurons. The protein is Homeobox protein ceh-36 of Caenorhabditis elegans.